The primary structure comprises 502 residues: ATP synthase subunit alpha (502 aa).

Residue 169–176 (GDKQTGKT) coordinates ATP.

Belongs to the ATPase alpha/beta chains family. As to quaternary structure, F-type ATPases have 2 components, CF(1) - the catalytic core - and CF(0) - the membrane proton channel. CF(1) has five subunits: alpha(3), beta(3), gamma(1), delta(1), epsilon(1). CF(0) has three main subunits: a(1), b(2) and c(9-12). The alpha and beta chains form an alternating ring which encloses part of the gamma chain. CF(1) is attached to CF(0) by a central stalk formed by the gamma and epsilon chains, while a peripheral stalk is formed by the delta and b chains.

Its subcellular location is the cell membrane. The enzyme catalyses ATP + H2O + 4 H(+)(in) = ADP + phosphate + 5 H(+)(out). Functionally, produces ATP from ADP in the presence of a proton gradient across the membrane. The alpha chain is a regulatory subunit. The protein is ATP synthase subunit alpha of Lachnoclostridium phytofermentans (strain ATCC 700394 / DSM 18823 / ISDg) (Clostridium phytofermentans).